Consider the following 311-residue polypeptide: Pyrimidine-specific ribonucleoside hydrolase RihA (311 aa).

His240 is an active-site residue.

It belongs to the IUNH family. RihA subfamily.

In terms of biological role, hydrolyzes cytidine or uridine to ribose and cytosine or uracil, respectively. This Klebsiella pneumoniae subsp. pneumoniae (strain ATCC 700721 / MGH 78578) protein is Pyrimidine-specific ribonucleoside hydrolase RihA.